We begin with the raw amino-acid sequence, 302 residues long: Protoheme IX farnesyltransferase 1 (302 aa).

9 consecutive transmembrane segments (helical) span residues 30-50 (VVALMLLTVLVGMCLALPGAV), 52-72 (LQPLIFGLLGIGMMAGAAAAF), 102-122 (ALTFSISLAVLGFVLLYTLVN), 124-144 (LTAWLTFASLLGYAVVYTAYL), 152-172 (IVVGGLAGAMPPLLGWTSVTG), 178-198 (ALLLVIIIFAWTPPHFWALAI), 224-244 (CILLYTILLAIACLLPVLVGM), 245-265 (CGPLYLVGSTLLSCGFIYKSW), and 282-302 (FSIYHLMLLFIVLLVDHYLWV).

This sequence belongs to the UbiA prenyltransferase family. Protoheme IX farnesyltransferase subfamily.

The protein resides in the cell inner membrane. It carries out the reaction heme b + (2E,6E)-farnesyl diphosphate + H2O = Fe(II)-heme o + diphosphate. It participates in porphyrin-containing compound metabolism; heme O biosynthesis; heme O from protoheme: step 1/1. Converts heme B (protoheme IX) to heme O by substitution of the vinyl group on carbon 2 of heme B porphyrin ring with a hydroxyethyl farnesyl side group. This Shewanella woodyi (strain ATCC 51908 / MS32) protein is Protoheme IX farnesyltransferase 1.